A 240-amino-acid chain; its full sequence is UDP-2,3-diacylglucosamine hydrolase (240 aa).

Asp-8, His-10, Asp-41, Asn-79, and His-114 together coordinate Mn(2+). 79–80 contacts substrate; that stretch reads NR. Positions 122, 160, 164, 167, and 195 each coordinate substrate. Mn(2+)-binding residues include His-195 and His-197.

Belongs to the LpxH family. It depends on Mn(2+) as a cofactor.

Its subcellular location is the cell inner membrane. The enzyme catalyses UDP-2-N,3-O-bis[(3R)-3-hydroxytetradecanoyl]-alpha-D-glucosamine + H2O = 2-N,3-O-bis[(3R)-3-hydroxytetradecanoyl]-alpha-D-glucosaminyl 1-phosphate + UMP + 2 H(+). It participates in glycolipid biosynthesis; lipid IV(A) biosynthesis; lipid IV(A) from (3R)-3-hydroxytetradecanoyl-[acyl-carrier-protein] and UDP-N-acetyl-alpha-D-glucosamine: step 4/6. Its function is as follows. Hydrolyzes the pyrophosphate bond of UDP-2,3-diacylglucosamine to yield 2,3-diacylglucosamine 1-phosphate (lipid X) and UMP by catalyzing the attack of water at the alpha-P atom. Involved in the biosynthesis of lipid A, a phosphorylated glycolipid that anchors the lipopolysaccharide to the outer membrane of the cell. This chain is UDP-2,3-diacylglucosamine hydrolase, found in Yersinia enterocolitica serotype O:8 / biotype 1B (strain NCTC 13174 / 8081).